A 102-amino-acid polypeptide reads, in one-letter code: Large ribosomal subunit protein bL21 (102 aa).

The protein belongs to the bacterial ribosomal protein bL21 family. As to quaternary structure, part of the 50S ribosomal subunit. Contacts protein L20.

This protein binds to 23S rRNA in the presence of protein L20. This Solidesulfovibrio magneticus (strain ATCC 700980 / DSM 13731 / RS-1) (Desulfovibrio magneticus) protein is Large ribosomal subunit protein bL21.